A 215-amino-acid polypeptide reads, in one-letter code: Adenylate kinase (215 aa).

10–15 (GAGKGT) is an ATP binding site. Positions 30-59 (STGDMLRAAIKAGTPLGLEAKKIIDEGGLV) are NMP. Residues T31, R36, 57-59 (GLV), 85-88 (GFPR), and Q92 contribute to the AMP site. The interval 122 to 159 (GRRVHLASGRTYHVTYNPPKTEGKDDVTGEDLIQRDDD) is LID. ATP contacts are provided by residues R123 and 132–133 (TY). Residues R156 and R167 each contribute to the AMP site. Q200 serves as a coordination point for ATP.

This sequence belongs to the adenylate kinase family. As to quaternary structure, monomer.

The protein resides in the cytoplasm. The catalysed reaction is AMP + ATP = 2 ADP. It functions in the pathway purine metabolism; AMP biosynthesis via salvage pathway; AMP from ADP: step 1/1. Functionally, catalyzes the reversible transfer of the terminal phosphate group between ATP and AMP. Plays an important role in cellular energy homeostasis and in adenine nucleotide metabolism. The polypeptide is Adenylate kinase (Neisseria gonorrhoeae (strain ATCC 700825 / FA 1090)).